The chain runs to 156 residues: Cytochrome c-type biogenesis protein CcmE (156 aa).

Residues 1 to 8 (MNPLRRKR) lie on the Cytoplasmic side of the membrane. Residues 9-29 (LLIILAILAGVGIAVGLAMSA) form a helical; Signal-anchor for type II membrane protein membrane-spanning segment. The Periplasmic segment spans residues 30–156 (LRENINLFYT…RIRSLPRRAK (127 aa)). His-124 and Tyr-128 together coordinate heme.

The protein belongs to the CcmE/CycJ family.

It localises to the cell inner membrane. Heme chaperone required for the biogenesis of c-type cytochromes. Transiently binds heme delivered by CcmC and transfers the heme to apo-cytochromes in a process facilitated by CcmF and CcmH. In Pseudomonas fluorescens, this protein is Cytochrome c-type biogenesis protein CcmE.